The following is a 38-amino-acid chain: Large ribosomal subunit protein bL36 (38 aa).

It belongs to the bacterial ribosomal protein bL36 family.

This chain is Large ribosomal subunit protein bL36, found in Kosmotoga olearia (strain ATCC BAA-1733 / DSM 21960 / TBF 19.5.1).